Consider the following 478-residue polypeptide: Adenosylhomocysteinase (478 aa).

Substrate is bound by residues T67, D144, and E204. 205-207 (TTT) is a binding site for NAD(+). K234 and D238 together coordinate substrate. NAD(+)-binding positions include N239, 268-273 (GYGDVG), E291, N326, 347-349 (IGH), and N392.

Belongs to the adenosylhomocysteinase family. Requires NAD(+) as cofactor.

It localises to the cytoplasm. It carries out the reaction S-adenosyl-L-homocysteine + H2O = L-homocysteine + adenosine. It functions in the pathway amino-acid biosynthesis; L-homocysteine biosynthesis; L-homocysteine from S-adenosyl-L-homocysteine: step 1/1. Functionally, may play a key role in the regulation of the intracellular concentration of adenosylhomocysteine. This is Adenosylhomocysteinase from Nitrosomonas europaea (strain ATCC 19718 / CIP 103999 / KCTC 2705 / NBRC 14298).